Here is a 362-residue protein sequence, read N- to C-terminus: Endolytic peptidoglycan transglycosylase RlpA (362 aa).

Positions 1–17 (MRKQWLGICIAAGMLAA) are cleaved as a signal peptide. Cys-18 carries the N-palmitoyl cysteine lipid modification. Residue Cys-18 is the site of S-diacylglycerol cysteine attachment. The tract at residues 198 to 276 (PDLSGGAGTS…PSTTPATSPA (79 aa)) is disordered. Over residues 262-276 (PVVTAPSTTPATSPA) the composition is skewed to low complexity. One can recognise an SPOR domain in the interval 285–361 (QSASGNFMVQ…AQLQSFITTA (77 aa)).

It belongs to the RlpA family.

It is found in the cell membrane. Its function is as follows. Lytic transglycosylase with a strong preference for naked glycan strands that lack stem peptides. The chain is Endolytic peptidoglycan transglycosylase RlpA from Escherichia coli O157:H7.